The sequence spans 88 residues: Small ribosomal subunit protein uS15 (88 aa).

Positions 1–20 (MLTTQDKQNIIKENQQSEGD) are enriched in polar residues. The interval 1–24 (MLTTQDKQNIIKENQQSEGDTGSP) is disordered.

It belongs to the universal ribosomal protein uS15 family. Part of the 30S ribosomal subunit. Forms a bridge to the 50S subunit in the 70S ribosome, contacting the 23S rRNA.

In terms of biological role, one of the primary rRNA binding proteins, it binds directly to 16S rRNA where it helps nucleate assembly of the platform of the 30S subunit by binding and bridging several RNA helices of the 16S rRNA. Forms an intersubunit bridge (bridge B4) with the 23S rRNA of the 50S subunit in the ribosome. This Francisella philomiragia subsp. philomiragia (strain ATCC 25017 / CCUG 19701 / FSC 153 / O#319-036) protein is Small ribosomal subunit protein uS15.